The sequence spans 721 residues: Mitogen-activated protein kinase 6 (721 aa).

Residue Met-1 forms a Peptide (Met-Gly) (interchain with G-Cter in ubiquitin) linkage. The region spanning 20–316 (YMDLKPLGCG…AEEALSHPYM (297 aa)) is the Protein kinase domain. ATP is bound by residues 26 to 34 (LGCGGNGLV) and Lys-49. Residue Asp-152 is the Proton acceptor of the active site. Residue Ser-189 is modified to Phosphoserine; by PAK1, PAK2 and PAK3. The SEG motif signature appears at 189-191 (SEG). Residues 332-337 (FHIEDE) carry the FRIEDE motif motif. 6 positions are modified to phosphoserine: Ser-386, Ser-452, Ser-556, Ser-558, Ser-665, and Ser-684. Over residues 701–715 (AMKSSPQIPHQTYSS) the composition is skewed to polar residues. A disordered region spans residues 701–721 (AMKSSPQIPHQTYSSILKHLN).

It belongs to the protein kinase superfamily. CMGC Ser/Thr protein kinase family. MAP kinase subfamily. As to quaternary structure, heterodimer with ERK4/MAPK4. Interacts with (via FRIEDE motif) MAPKAPK5. Interacts with UBE3A; this interaction may be indirect and mediated by HERC2, possibly via HERC2 interaction with NEURL4. The cofactor is Mg(2+). In terms of processing, phosphorylated at Ser-189 by PAK1, PAK2 and PAK3 resulting in catalytic activation. Phosphorylated by MAPKAPK5 at other sites. Post-translationally, ubiquitination at Met-1 leads to degradation by the proteasome pathway.

It localises to the cytoplasm. The protein resides in the nucleus. It carries out the reaction L-seryl-[protein] + ATP = O-phospho-L-seryl-[protein] + ADP + H(+). It catalyses the reaction L-threonyl-[protein] + ATP = O-phospho-L-threonyl-[protein] + ADP + H(+). Its activity is regulated as follows. Activated by phosphorylation at Ser-189. Its function is as follows. Atypical MAPK protein. Phosphorylates microtubule-associated protein 2 (MAP2) and MAPKAPK5. The precise role of the complex formed with MAPKAPK5 is still unclear, but the complex follows a complex set of phosphorylation events: upon interaction with atypical MAPKAPK5, ERK3/MAPK6 is phosphorylated at Ser-189 and then mediates phosphorylation and activation of MAPKAPK5, which in turn phosphorylates ERK3/MAPK6. May promote entry in the cell cycle. This chain is Mitogen-activated protein kinase 6 (MAPK6), found in Pongo abelii (Sumatran orangutan).